We begin with the raw amino-acid sequence, 115 residues long: NADH-ubiquinone oxidoreductase chain 3 (115 aa).

The next 3 helical transmembrane spans lie at 4–24 (ALTLFTNTALASLLVLIAFWL), 55–75 (FFLVAITFLLFDLEIALLLPL), and 84–104 (LTTMLTMALLLISLLAASLAY).

The protein belongs to the complex I subunit 3 family. Core subunit of respiratory chain NADH dehydrogenase (Complex I) which is composed of 45 different subunits. Interacts with TMEM186. Interacts with TMEM242.

Its subcellular location is the mitochondrion inner membrane. The enzyme catalyses a ubiquinone + NADH + 5 H(+)(in) = a ubiquinol + NAD(+) + 4 H(+)(out). Its function is as follows. Core subunit of the mitochondrial membrane respiratory chain NADH dehydrogenase (Complex I) which catalyzes electron transfer from NADH through the respiratory chain, using ubiquinone as an electron acceptor. Essential for the catalytic activity of complex I. This Phoca vitulina (Harbor seal) protein is NADH-ubiquinone oxidoreductase chain 3.